The primary structure comprises 265 residues: UPF0354 protein ABC2771 (265 aa).

This sequence belongs to the UPF0354 family.

The chain is UPF0354 protein ABC2771 from Shouchella clausii (strain KSM-K16) (Alkalihalobacillus clausii).